The primary structure comprises 131 residues: Small ribosomal subunit protein uS8 (131 aa).

The protein belongs to the universal ribosomal protein uS8 family. Part of the 30S ribosomal subunit. Contacts proteins S5 and S12.

In terms of biological role, one of the primary rRNA binding proteins, it binds directly to 16S rRNA central domain where it helps coordinate assembly of the platform of the 30S subunit. The chain is Small ribosomal subunit protein uS8 from Variovorax paradoxus (strain S110).